We begin with the raw amino-acid sequence, 466 residues long: uncharacterized protein (466 aa).

Positions 178-466 (SQGSASSMWM…QGMLGVKYSW (289 aa)) constitute an Autotransporter domain.

This is an uncharacterized protein from Escherichia coli (strain K12).